The primary structure comprises 341 residues: N-acetyl-gamma-glutamyl-phosphate reductase (341 aa).

Cysteine 147 is a catalytic residue.

The protein belongs to the NAGSA dehydrogenase family. Type 1 subfamily.

It is found in the cytoplasm. The catalysed reaction is N-acetyl-L-glutamate 5-semialdehyde + phosphate + NADP(+) = N-acetyl-L-glutamyl 5-phosphate + NADPH + H(+). It functions in the pathway amino-acid biosynthesis; L-arginine biosynthesis; N(2)-acetyl-L-ornithine from L-glutamate: step 3/4. In terms of biological role, catalyzes the NADPH-dependent reduction of N-acetyl-5-glutamyl phosphate to yield N-acetyl-L-glutamate 5-semialdehyde. This is N-acetyl-gamma-glutamyl-phosphate reductase from Dehalococcoides mccartyi (strain CBDB1).